The following is a 221-amino-acid chain: uncharacterized protein (221 aa).

A compositionally biased stretch (basic and acidic residues) spans 1-16 (MESSRWDKDPPGERRP). Residues 1-64 (MESSRWDKDP…SHTPQTNTRR (64 aa)) form a disordered region.

This is an uncharacterized protein from Homo sapiens (Human).